The chain runs to 468 residues: MRVLSVLLVALTVAGSAYSQCTVNDASSAQLDSTFGPTTGGDALTFNNNLGNQIQIANNYNFVSNGVVQSNGGDNLVLTGTLTPANSSLTDKFSLRAAFVRTTTPSDVKRELQAGAYTSNGGTVDPSTWSFYQILPDNTKMVSLTNPNTVVTMSENPNTALQVGVGANGKNLQNGASGWFQFKATDGSVSIQSGNGEMEVVDININLGCSSTFDCVSNTYTISKASIDKSLTDQQNDQALYVDQVSTVFGNQQRFDTSSGTVNTISIDQTNGNLRLGAGFTSISDSSITVNCDLRFSPALPSANYQPKLELMNSAYVSGGGSIDPNTWAYYTVNVSGSSCTRNDGTVVTITGDQDNMYLQWGKGANGKNGNFGLSVWLNYVDAALTNPFFDINVDTVCETNPSTNLPETSPPTEQPTAPPATCPPGCIPAIPVVNVTETPAAGNSASSIEMSKLVVAILSLFILAFFH.

Residues 1–19 (MRVLSVLLVALTVAGSAYS) form the signal peptide. 2 N-linked (GlcNAc...) asparagine glycosylation sites follow: Asn-86 and Asn-334. A disordered region spans residues 401–421 (NPSTNLPETSPPTEQPTAPPA). The segment covering 409-421 (TSPPTEQPTAPPA) has biased composition (pro residues). Residue Asn-435 is glycosylated (N-linked (GlcNAc...) asparagine). Residue Asn-444 is the site of GPI-like-anchor amidated asparagine attachment. A propeptide spans 445–468 (SASSIEMSKLVVAILSLFILAFFH) (removed in mature form).

It localises to the cell membrane. This is an uncharacterized protein from Dictyostelium discoideum (Social amoeba).